Here is a 400-residue protein sequence, read N- to C-terminus: CinA-like protein (400 aa).

The protein belongs to the CinA family.

This is CinA-like protein from Escherichia coli (strain SE11).